The following is a 292-amino-acid chain: Elongation factor Ts (292 aa).

An involved in Mg(2+) ion dislocation from EF-Tu region spans residues Thr-80–Val-83.

This sequence belongs to the EF-Ts family.

The protein localises to the cytoplasm. Its function is as follows. Associates with the EF-Tu.GDP complex and induces the exchange of GDP to GTP. It remains bound to the aminoacyl-tRNA.EF-Tu.GTP complex up to the GTP hydrolysis stage on the ribosome. This Cupriavidus necator (strain ATCC 17699 / DSM 428 / KCTC 22496 / NCIMB 10442 / H16 / Stanier 337) (Ralstonia eutropha) protein is Elongation factor Ts.